The sequence spans 123 residues: Small ribosomal subunit protein uS12 (123 aa).

The interval 1–32 is disordered; sequence MPTIQQLVRKGRKTKVSKNKTPALKGSPQRRG. Residues 9–18 are compositionally biased toward basic residues; sequence RKGRKTKVSK. Aspartate 89 carries the post-translational modification 3-methylthioaspartic acid.

This sequence belongs to the universal ribosomal protein uS12 family. As to quaternary structure, part of the 30S ribosomal subunit. Contacts proteins S8 and S17. May interact with IF1 in the 30S initiation complex.

Functionally, with S4 and S5 plays an important role in translational accuracy. Interacts with and stabilizes bases of the 16S rRNA that are involved in tRNA selection in the A site and with the mRNA backbone. Located at the interface of the 30S and 50S subunits, it traverses the body of the 30S subunit contacting proteins on the other side and probably holding the rRNA structure together. The combined cluster of proteins S8, S12 and S17 appears to hold together the shoulder and platform of the 30S subunit. The polypeptide is Small ribosomal subunit protein uS12 (Thermobifida fusca (strain YX)).